Reading from the N-terminus, the 519-residue chain is Ribonuclease Y (519 aa).

Residues 3–23 (LLSLLLILLGIILGVVVGYIV) traverse the membrane as a helical segment. The region spanning 209–269 (TVSVVNLPND…IRREIARTAL (61 aa)) is the KH domain. An HD domain is found at 335-428 (VLKHSIEVAH…VAAADALSAA (94 aa)).

The protein belongs to the RNase Y family.

It is found in the cell membrane. Its function is as follows. Endoribonuclease that initiates mRNA decay. The polypeptide is Ribonuclease Y (Staphylococcus epidermidis (strain ATCC 35984 / DSM 28319 / BCRC 17069 / CCUG 31568 / BM 3577 / RP62A)).